Consider the following 124-residue polypeptide: Mediator of RNA polymerase II transcription subunit 31 (124 aa).

It belongs to the Mediator complex subunit 31 family. As to quaternary structure, component of the Mediator complex.

The protein resides in the nucleus. Functionally, component of the Mediator complex, a coactivator involved in the regulated transcription of nearly all RNA polymerase II-dependent genes. Mediator functions as a bridge to convey information from gene-specific regulatory proteins to the basal RNA polymerase II transcription machinery. Mediator is recruited to promoters by direct interactions with regulatory proteins and serves as a scaffold for the assembly of a functional preinitiation complex with RNA polymerase II and the general transcription factors. The protein is Mediator of RNA polymerase II transcription subunit 31 (SOH1) of Kluyveromyces lactis (strain ATCC 8585 / CBS 2359 / DSM 70799 / NBRC 1267 / NRRL Y-1140 / WM37) (Yeast).